We begin with the raw amino-acid sequence, 588 residues long: ATP-dependent lipid A-core flippase (588 aa).

6 helical membrane-spanning segments follow: residues 23–43 (FWPV…IDAG), 56–76 (FITI…IGIT), 141–161 (DALT…TVMM), 162–182 (VICW…GIIV), 257–277 (LVIA…STVI), and 278–298 (TISA…IKPM). The region spanning 28 to 310 (LLGVLANILY…LTTLNATIQR (283 aa)) is the ABC transmembrane type-1 domain. Residues 342-576 (IEFKHVYHAY…DGHYAQLYKV (235 aa)) form the ABC transporter domain. Residue 375-382 (GHSGSGKT) participates in ATP binding.

This sequence belongs to the ABC transporter superfamily. Lipid exporter (TC 3.A.1.106) family. As to quaternary structure, homodimer.

It is found in the cell inner membrane. It carries out the reaction ATP + H2O + lipid A-core oligosaccharideSide 1 = ADP + phosphate + lipid A-core oligosaccharideSide 2.. Involved in lipopolysaccharide (LPS) biosynthesis. Translocates lipid A-core from the inner to the outer leaflet of the inner membrane. Transmembrane domains (TMD) form a pore in the inner membrane and the ATP-binding domain (NBD) is responsible for energy generation. This Legionella pneumophila (strain Paris) protein is ATP-dependent lipid A-core flippase.